Reading from the N-terminus, the 888-residue chain is Leucine--tRNA ligase (888 aa).

Positions 42–52 match the 'HIGH' region motif; it reads PYPSGKLHMGH. Residues 640-644 carry the 'KMSKS' region motif; sequence TMSKS. Lys643 serves as a coordination point for ATP.

It belongs to the class-I aminoacyl-tRNA synthetase family.

The protein resides in the cytoplasm. It catalyses the reaction tRNA(Leu) + L-leucine + ATP = L-leucyl-tRNA(Leu) + AMP + diphosphate. The polypeptide is Leucine--tRNA ligase (Polaromonas naphthalenivorans (strain CJ2)).